The primary structure comprises 96 residues: Large ribosomal subunit protein bL28 (96 aa).

The interval 1-22 is disordered; sequence MSRRCELTGKGPMTGNNVSHAN.

Belongs to the bacterial ribosomal protein bL28 family.

The protein is Large ribosomal subunit protein bL28 of Ruegeria sp. (strain TM1040) (Silicibacter sp.).